We begin with the raw amino-acid sequence, 116 residues long: NADH-ubiquinone oxidoreductase chain 3 (116 aa).

The next 3 membrane-spanning stretches (helical) occupy residues L3–F23, F56–L76, and P85–Y105.

This sequence belongs to the complex I subunit 3 family.

It is found in the mitochondrion membrane. It carries out the reaction a ubiquinone + NADH + 5 H(+)(in) = a ubiquinol + NAD(+) + 4 H(+)(out). Functionally, core subunit of the mitochondrial membrane respiratory chain NADH dehydrogenase (Complex I) that is believed to belong to the minimal assembly required for catalysis. Complex I functions in the transfer of electrons from NADH to the respiratory chain. The immediate electron acceptor for the enzyme is believed to be ubiquinone. This is NADH-ubiquinone oxidoreductase chain 3 (MT-ND3) from Salmo salar (Atlantic salmon).